Here is a 241-residue protein sequence, read N- to C-terminus: Platelet-derived growth factor subunit B (241 aa).

Positions 1 to 20 are cleaved as a signal peptide; it reads MNRCWALFLSLCCYLRLVSA. The propeptide at 21-81 is removed in mature form; the sequence is EGDPIPEELY…ELESLARGRR (61 aa). Residue asparagine 63 is glycosylated (N-linked (GlcNAc...) asparagine). Cystine bridges form between cysteine 97–cysteine 141, cysteine 130–cysteine 178, and cysteine 134–cysteine 180. Residues 191 to 241 constitute a propeptide, removed in mature form; sequence RSPGGSQEQRAKTPQTRVTIRTVRVRRPPKGKHRKFKHTHDKTALKETLGA. Over residues 216–230 the composition is skewed to basic residues; that stretch reads RRPPKGKHRKFKHTH. Residues 216–241 form a disordered region; the sequence is RRPPKGKHRKFKHTHDKTALKETLGA.

It belongs to the PDGF/VEGF growth factor family. As to quaternary structure, antiparallel homodimer; disulfide-linked. Antiparallel heterodimer with PDGFA; disulfide-linked. The PDGFB homodimer interacts with PDGFRA and PDGFRB homodimers, and with heterodimers formed by PDGFRA and PDGFRB. The heterodimer composed of PDGFA and PDGFB interacts with PDGFRB homodimers, and with heterodimers formed by PDGFRA and PDGFRB. Interacts with XLKD1. Interacts with LRP1. Interacts with SORL1 (via the N-terminal ectodomain). Interacts with CD82; this interaction inhibits PDGFB-mediated signaling pathway. As to expression, expressed at high levels in the heart, brain (sustantia nigra), placenta and fetal kidney. Expressed at moderate levels in the brain (hippocampus), skeletal muscle, kidney and lung.

It is found in the secreted. Functionally, growth factor that plays an essential role in the regulation of embryonic development, cell proliferation, cell migration, survival and chemotaxis. Potent mitogen for cells of mesenchymal origin. Required for normal proliferation and recruitment of pericytes and vascular smooth muscle cells in the central nervous system, skin, lung, heart and placenta. Required for normal blood vessel development, and for normal development of kidney glomeruli. Plays an important role in wound healing. Signaling is modulated by the formation of heterodimers with PDGFA. This is Platelet-derived growth factor subunit B (PDGFB) from Homo sapiens (Human).